The sequence spans 87 residues: Small ribosomal subunit protein bS20 (87 aa).

Residues 1 to 10 (MANIKSKQKR) are compositionally biased toward basic residues. The tract at residues 1-27 (MANIKSKQKRILTNEKSRQRNKSVRSA) is disordered.

It belongs to the bacterial ribosomal protein bS20 family.

Binds directly to 16S ribosomal RNA. The sequence is that of Small ribosomal subunit protein bS20 from Corynebacterium aurimucosum (strain ATCC 700975 / DSM 44827 / CIP 107346 / CN-1) (Corynebacterium nigricans).